An 83-amino-acid chain; its full sequence is Exodeoxyribonuclease 7 small subunit (83 aa).

This sequence belongs to the XseB family. Heterooligomer composed of large and small subunits.

It localises to the cytoplasm. The catalysed reaction is Exonucleolytic cleavage in either 5'- to 3'- or 3'- to 5'-direction to yield nucleoside 5'-phosphates.. In terms of biological role, bidirectionally degrades single-stranded DNA into large acid-insoluble oligonucleotides, which are then degraded further into small acid-soluble oligonucleotides. The polypeptide is Exodeoxyribonuclease 7 small subunit (Rhodopseudomonas palustris (strain ATCC BAA-98 / CGA009)).